Reading from the N-terminus, the 156-residue chain is ATP synthase subunit b (156 aa).

Residues 7 to 27 form a helical membrane-spanning segment; it reads LIGQTVAFIIFVWFCMKFVWP.

Belongs to the ATPase B chain family. In terms of assembly, F-type ATPases have 2 components, F(1) - the catalytic core - and F(0) - the membrane proton channel. F(1) has five subunits: alpha(3), beta(3), gamma(1), delta(1), epsilon(1). F(0) has three main subunits: a(1), b(2) and c(10-14). The alpha and beta chains form an alternating ring which encloses part of the gamma chain. F(1) is attached to F(0) by a central stalk formed by the gamma and epsilon chains, while a peripheral stalk is formed by the delta and b chains.

The protein localises to the cell inner membrane. In terms of biological role, f(1)F(0) ATP synthase produces ATP from ADP in the presence of a proton or sodium gradient. F-type ATPases consist of two structural domains, F(1) containing the extramembraneous catalytic core and F(0) containing the membrane proton channel, linked together by a central stalk and a peripheral stalk. During catalysis, ATP synthesis in the catalytic domain of F(1) is coupled via a rotary mechanism of the central stalk subunits to proton translocation. Its function is as follows. Component of the F(0) channel, it forms part of the peripheral stalk, linking F(1) to F(0). The sequence is that of ATP synthase subunit b from Shewanella baltica (strain OS185).